Reading from the N-terminus, the 150-residue chain is Ribosomal RNA large subunit methyltransferase H (150 aa).

S-adenosyl-L-methionine contacts are provided by residues Leu-71, Gly-100, and Phe-118–Phe-123.

It belongs to the RNA methyltransferase RlmH family. In terms of assembly, homodimer.

Its subcellular location is the cytoplasm. The enzyme catalyses pseudouridine(1915) in 23S rRNA + S-adenosyl-L-methionine = N(3)-methylpseudouridine(1915) in 23S rRNA + S-adenosyl-L-homocysteine + H(+). Specifically methylates the pseudouridine at position 1915 (m3Psi1915) in 23S rRNA. The protein is Ribosomal RNA large subunit methyltransferase H of Mycoplasmopsis agalactiae (strain NCTC 10123 / CIP 59.7 / PG2) (Mycoplasma agalactiae).